A 376-amino-acid polypeptide reads, in one-letter code: WD repeat-containing protein 86 (376 aa).

8 WD repeats span residues 13–52 (DHRG…CCAL), 55–94 (GHES…QVYR), 95–132 (GHTS…MSRE), 135–188 (GHRN…CHQT), 191–232 (GHTG…RVFR), 234–272 (HRGS…RTFT), 274–310 (HRRN…LRRV), and 313–350 (GHTF…GAPR).

This chain is WD repeat-containing protein 86 (WDR86), found in Homo sapiens (Human).